The primary structure comprises 513 residues: Calcium-dependent protein kinase 2 (513 aa).

The region spanning 65–323 is the Protein kinase domain; it reads YSFGKELGRG…SAQVLQHQWL (259 aa). Residues 71–79 and K94 each bind ATP; that span reads LGRGQFGVT. The active-site Proton acceptor is the D189. The autoinhibitory domain stretch occupies residues 329–359; sequence ASDKPIDSAVLSRMKQFRAMNKLKKMALKVI. 4 EF-hand domains span residues 366–401, 402–437, 438–473, and 478–508; these read EEIK…LGSK, LSEA…RHKL, ERDE…HEMG, and IREI…GMQQ. 19 residues coordinate Ca(2+): D379, D381, S383, T385, E390, D415, D417, N419, S421, E426, D451, D453, S455, E462, D486, D488, D490, R492, and E497.

The protein belongs to the protein kinase superfamily. Ser/Thr protein kinase family. CDPK subfamily.

It catalyses the reaction L-seryl-[protein] + ATP = O-phospho-L-seryl-[protein] + ADP + H(+). The enzyme catalyses L-threonyl-[protein] + ATP = O-phospho-L-threonyl-[protein] + ADP + H(+). With respect to regulation, activated by calcium. Autophosphorylation may play an important role in the regulation of the kinase activity. In terms of biological role, may play a role in signal transduction pathways that involve calcium as a second messenger. The sequence is that of Calcium-dependent protein kinase 2 (CPK2) from Zea mays (Maize).